Here is a 441-residue protein sequence, read N- to C-terminus: uncharacterized protein (441 aa).

A run of 12 helical transmembrane segments spans residues 21–41 (VVVA…MSLG), 51–71 (LGGG…AVAI), 94–114 (AAST…VTMS), 118–138 (VIPV…GVFA), 150–170 (VLTF…GGIF), 195–215 (AMLL…FVSY), 239–259 (QHIL…LYTG), 260–280 (SMII…VIAW), 291–311 (VHMM…AAVM), 334–354 (LAAL…GSSF), 363–383 (IYVP…ALVG), and 419–439 (VVPT…IAAM).

The protein localises to the cell membrane. This is an uncharacterized protein from Vibrio parahaemolyticus serotype O3:K6 (strain RIMD 2210633).